We begin with the raw amino-acid sequence, 44 residues long: Alpha-amylase inhibitor WDAI-3 (44 aa).

A disulfide bridge links cysteine 20 with cysteine 41.

It belongs to the protease inhibitor I6 (cereal trypsin/alpha-amylase inhibitor) family. As to quaternary structure, homodimer. Post-translationally, the disulfide bonds are essential for the inhibitor activity. As to expression, endosperm.

Its subcellular location is the secreted. Functionally, alpha-amylase inhibitor. The sequence is that of Alpha-amylase inhibitor WDAI-3 (IHA-B1-2) from Triticum aestivum (Wheat).